Here is a 228-residue protein sequence, read N- to C-terminus: Probable septum site-determining protein MinC (228 aa).

Belongs to the MinC family. Interacts with MinD and FtsZ.

Functionally, cell division inhibitor that blocks the formation of polar Z ring septums. Rapidly oscillates between the poles of the cell to destabilize FtsZ filaments that have formed before they mature into polar Z rings. Prevents FtsZ polymerization. The polypeptide is Probable septum site-determining protein MinC (Symbiobacterium thermophilum (strain DSM 24528 / JCM 14929 / IAM 14863 / T)).